Here is a 489-residue protein sequence, read N- to C-terminus: Glutamate--tRNA ligase (489 aa).

A 'HIGH' region motif is present at residues 11-21; it reads PSPTGHLHIGN. The 'KMSKS' region signature appears at 252–256; it reads KLSKR. ATP is bound at residue lysine 255.

This sequence belongs to the class-I aminoacyl-tRNA synthetase family. Glutamate--tRNA ligase type 1 subfamily. Monomer.

It is found in the cytoplasm. It catalyses the reaction tRNA(Glu) + L-glutamate + ATP = L-glutamyl-tRNA(Glu) + AMP + diphosphate. Catalyzes the attachment of glutamate to tRNA(Glu) in a two-step reaction: glutamate is first activated by ATP to form Glu-AMP and then transferred to the acceptor end of tRNA(Glu). The sequence is that of Glutamate--tRNA ligase from Oceanobacillus iheyensis (strain DSM 14371 / CIP 107618 / JCM 11309 / KCTC 3954 / HTE831).